The following is a 151-amino-acid chain: Ribosome maturation factor RimP (151 aa).

The protein belongs to the RimP family.

The protein resides in the cytoplasm. In terms of biological role, required for maturation of 30S ribosomal subunits. This is Ribosome maturation factor RimP from Aliivibrio salmonicida (strain LFI1238) (Vibrio salmonicida (strain LFI1238)).